The sequence spans 191 residues: Prostaglandin-H2 D-isomerase (191 aa).

An N-terminal signal peptide occupies residues 1–24 (MAALHTLWMGLVLLGVLGVLQTQA). Gln-25 is subject to Pyrrolidone carboxylic acid. Residue Asn-51 is glycosylated (N-linked (GlcNAc...) asparagine). The active-site Nucleophile is the Cys-65. N-linked (GlcNAc...) asparagine glycosylation is present at Asn-78. A disulfide bridge connects residues Cys-89 and Cys-186.

Belongs to the calycin superfamily. Lipocalin family. In terms of assembly, monomer.

Its subcellular location is the rough endoplasmic reticulum. It is found in the nucleus membrane. The protein resides in the golgi apparatus. It localises to the cytoplasm. The protein localises to the perinuclear region. Its subcellular location is the secreted. It carries out the reaction prostaglandin H2 = prostaglandin D2. Catalyzes the conversion of PGH2 to PGD2, a prostaglandin involved in smooth muscle contraction/relaxation and a potent inhibitor of platelet aggregation. Involved in a variety of CNS functions, such as sedation, NREM sleep and PGE2-induced allodynia, and may have an anti-apoptotic role in oligodendrocytes. Binds small non-substrate lipophilic molecules, including biliverdin, bilirubin, retinal, retinoic acid and thyroid hormone, and may act as a scavenger for harmful hydrophobic molecules and as a secretory retinoid and thyroid hormone transporter. Possibly involved in development and maintenance of the blood-brain, blood-retina, blood-aqueous humor and blood-testis barrier. It is likely to play important roles in both maturation and maintenance of the central nervous system and male reproductive system. Involved in PLA2G3-dependent maturation of mast cells. PLA2G3 is secreted by immature mast cells and acts on nearby fibroblasts upstream to PTDGS to synthesize PGD2, which in turn promotes mast cell maturation and degranulation via PTGDR. The protein is Prostaglandin-H2 D-isomerase (PTGDS) of Ursus arctos (Brown bear).